A 207-amino-acid chain; its full sequence is Small ribosomal subunit protein uS4 (207 aa).

Residues 31 to 53 (KAKFDSKPGQHGRTSGARTSDFG) are disordered. The 64-residue stretch at 97–160 (SRLDNVVYRM…KKQNRIVEAL (64 aa)) folds into the S4 RNA-binding domain.

It belongs to the universal ribosomal protein uS4 family. As to quaternary structure, part of the 30S ribosomal subunit. Contacts protein S5. The interaction surface between S4 and S5 is involved in control of translational fidelity.

One of the primary rRNA binding proteins, it binds directly to 16S rRNA where it nucleates assembly of the body of the 30S subunit. Functionally, with S5 and S12 plays an important role in translational accuracy. In Albidiferax ferrireducens (strain ATCC BAA-621 / DSM 15236 / T118) (Rhodoferax ferrireducens), this protein is Small ribosomal subunit protein uS4.